The chain runs to 201 residues: Riboflavin synthase (201 aa).

2 Lumazine-binding repeats span residues 1–97 (MFTG…LGGH) and 98–197 (IVQG…ERLM). 2,4-dihydroxypteridine is bound by residues 4–6 (GIV), 47–49 (CLT), 62–67 (DVMAET), 101–103 (GHV), Lys136, 145–147 (SLT), and 162–167 (SLIPTT).

In terms of assembly, homotrimer.

The enzyme catalyses 2 6,7-dimethyl-8-(1-D-ribityl)lumazine + H(+) = 5-amino-6-(D-ribitylamino)uracil + riboflavin. It functions in the pathway cofactor biosynthesis; riboflavin biosynthesis; riboflavin from 2-hydroxy-3-oxobutyl phosphate and 5-amino-6-(D-ribitylamino)uracil: step 2/2. Its function is as follows. Catalyzes the dismutation of two molecules of 6,7-dimethyl-8-ribityllumazine, resulting in the formation of riboflavin and 5-amino-6-(D-ribitylamino)uracil. This Mycobacterium bovis (strain ATCC BAA-935 / AF2122/97) protein is Riboflavin synthase (ribE).